The following is a 181-amino-acid chain: ATP synthase subunit delta (181 aa).

Belongs to the ATPase delta chain family. F-type ATPases have 2 components, F(1) - the catalytic core - and F(0) - the membrane proton channel. F(1) has five subunits: alpha(3), beta(3), gamma(1), delta(1), epsilon(1). F(0) has three main subunits: a(1), b(2) and c(10-14). The alpha and beta chains form an alternating ring which encloses part of the gamma chain. F(1) is attached to F(0) by a central stalk formed by the gamma and epsilon chains, while a peripheral stalk is formed by the delta and b chains.

Its subcellular location is the cell inner membrane. In terms of biological role, f(1)F(0) ATP synthase produces ATP from ADP in the presence of a proton or sodium gradient. F-type ATPases consist of two structural domains, F(1) containing the extramembraneous catalytic core and F(0) containing the membrane proton channel, linked together by a central stalk and a peripheral stalk. During catalysis, ATP synthesis in the catalytic domain of F(1) is coupled via a rotary mechanism of the central stalk subunits to proton translocation. Functionally, this protein is part of the stalk that links CF(0) to CF(1). It either transmits conformational changes from CF(0) to CF(1) or is implicated in proton conduction. The sequence is that of ATP synthase subunit delta from Syntrophus aciditrophicus (strain SB).